The sequence spans 579 residues: Membrane protein insertase YidC (579 aa).

The helical transmembrane segment at 10-30 (LVIVTILSALILFGWSFVTKH) threads the bilayer. Residues 35 to 61 (PPAPTQQGKNQPKAELTAEESGDKPLK) are disordered. Helical transmembrane passes span 330–350 (FDKA…FYYL), 351–371 (DWLF…VFTI), 423–443 (VNPF…IALY), 478–498 (LLHF…ILGI), and 523–543 (PLIS…YYIF). Residues 560–572 (STPEERQDRAERK) are compositionally biased toward basic and acidic residues. Residues 560–579 (STPEERQDRAERKRPSKKKA) are disordered.

This sequence belongs to the OXA1/ALB3/YidC family. Type 1 subfamily. Interacts with the Sec translocase complex via SecD. Specifically interacts with transmembrane segments of nascent integral membrane proteins during membrane integration.

The protein localises to the cell inner membrane. Its function is as follows. Required for the insertion and/or proper folding and/or complex formation of integral membrane proteins into the membrane. Involved in integration of membrane proteins that insert both dependently and independently of the Sec translocase complex, as well as at least some lipoproteins. Aids folding of multispanning membrane proteins. The polypeptide is Membrane protein insertase YidC (Zymomonas mobilis subsp. mobilis (strain ATCC 31821 / ZM4 / CP4)).